The chain runs to 528 residues: Bifunctional purine biosynthesis protein PurH (528 aa).

The region spanning 2 to 149 (TDLAPLRRAL…KNHGFVSVVV (148 aa)) is the MGS-like domain.

This sequence belongs to the PurH family.

The enzyme catalyses (6R)-10-formyltetrahydrofolate + 5-amino-1-(5-phospho-beta-D-ribosyl)imidazole-4-carboxamide = 5-formamido-1-(5-phospho-D-ribosyl)imidazole-4-carboxamide + (6S)-5,6,7,8-tetrahydrofolate. The catalysed reaction is IMP + H2O = 5-formamido-1-(5-phospho-D-ribosyl)imidazole-4-carboxamide. Its pathway is purine metabolism; IMP biosynthesis via de novo pathway; 5-formamido-1-(5-phospho-D-ribosyl)imidazole-4-carboxamide from 5-amino-1-(5-phospho-D-ribosyl)imidazole-4-carboxamide (10-formyl THF route): step 1/1. It functions in the pathway purine metabolism; IMP biosynthesis via de novo pathway; IMP from 5-formamido-1-(5-phospho-D-ribosyl)imidazole-4-carboxamide: step 1/1. This is Bifunctional purine biosynthesis protein PurH from Roseobacter denitrificans (strain ATCC 33942 / OCh 114) (Erythrobacter sp. (strain OCh 114)).